Reading from the N-terminus, the 88-residue chain is Large ribosomal subunit protein bL27 (88 aa).

This sequence belongs to the bacterial ribosomal protein bL27 family.

The sequence is that of Large ribosomal subunit protein bL27 from Mycolicibacterium smegmatis (strain ATCC 700084 / mc(2)155) (Mycobacterium smegmatis).